The primary structure comprises 570 residues: Auxin efflux carrier component 6 (570 aa).

Residues 1-6 (MITGNE) are Extracellular-facing. Residues 7–27 (FYTVMCAMAPLYFAMFVAYGS) form a helical membrane-spanning segment. The Cytoplasmic segment spans residues 28–38 (VKWCKIFTPAQ). A helical membrane pass occupies residues 39 to 59 (CSGINRFVSVFAVPVLSFHFI). Position 51 (Val51) interacts with (indol-3-yl)acetate. Over 60–70 (SQNNPYKMDTM) the chain is Extracellular. Residues 71–91 (FILADTLSKIFVFVLLSLWAV) traverse the membrane as a helical segment. Topologically, residues 92-100 (FFKAGGLDW) are cytoplasmic. The helical transmembrane segment at 101–121 (LITLFSIATLPNTLVMGIPLL) threads the bilayer. (indol-3-yl)acetate is bound by residues Asn112 and Leu114. Over 122–131 (QAMYGDYTQT) the chain is Extracellular. A helical membrane pass occupies residues 132 to 152 (LMVQLVVLQCIIWYTLLLFLF). Tyr145 contacts (indol-3-yl)acetate. Residues 153–430 (ELRAARLLIR…LSRNPNTYSS (278 aa)) lie on the Cytoplasmic side of the membrane. Phosphoserine occurs at positions 230 and 308. Residues 431-451 (LLGLVWSLISFKWNIPMPNIV) form a helical membrane-spanning segment. The Extracellular segment spans residues 452–454 (DFS). A helical membrane pass occupies residues 455-475 (IKIISDAGLGMAMFSLGLFMA). At 476–491 (LQPKMIPCGAKKATMG) the chain is on the cytoplasmic side. Residues 492-512 (MLIRFISGPLFMAGASLLVGL) traverse the membrane as a helical segment. Residues 513 to 515 (RGS) lie on the Extracellular side of the membrane. A helical transmembrane segment spans residues 516–536 (RLHAAIVQAALPQGIVPFVFA). The (indol-3-yl)acetate site is built by Ile530 and Val531. Residues 537-549 (REYNLHPDLLSTL) lie on the Cytoplasmic side of the membrane. The chain crosses the membrane as a helical span at residues 550–570 (VIFGMIVSLPVTILYYVLLGL).

The protein belongs to the auxin efflux carrier (TC 2.A.69.1) family. As to quaternary structure, homodimer. Expressed in the vasculature of the primary root, cotyledons, floral stem, sepals and the main transmitting tract of the reproductive silique. Expressed in embryos, shoot meristem, root tip and lateral root meristems. Expressed in the nectaries and the floral organ boundaries of the anthers. Detected in pollen. Expressed in broad subepidermal domains that narrowed to sites of vein formation. Expressed in veins of mature leaves.

The protein localises to the endoplasmic reticulum membrane. Functionally, component of the intracellular auxin-transport pathway. Regulates auxin transport and auxin homeostasis. Directly involved in the regulation of nectar production. Involved in unfolded protein response (UPR) activation. Involved in the control of vein patterning. Redundantly with PIN8, inhibits the vein-formation-promoting functions of PIN5. PIN5, PIN6, and PIN8 control vein network geometry, but they are expressed in mutually exclusive domains of leaf vascular cells. The chain is Auxin efflux carrier component 6 from Arabidopsis thaliana (Mouse-ear cress).